The following is a 284-amino-acid chain: Bifunctional protein FolD (284 aa).

NADP(+) is bound by residues 165–167, T192, and V233; that span reads GRG.

This sequence belongs to the tetrahydrofolate dehydrogenase/cyclohydrolase family. Homodimer.

It catalyses the reaction (6R)-5,10-methylene-5,6,7,8-tetrahydrofolate + NADP(+) = (6R)-5,10-methenyltetrahydrofolate + NADPH. It carries out the reaction (6R)-5,10-methenyltetrahydrofolate + H2O = (6R)-10-formyltetrahydrofolate + H(+). It functions in the pathway one-carbon metabolism; tetrahydrofolate interconversion. Catalyzes the oxidation of 5,10-methylenetetrahydrofolate to 5,10-methenyltetrahydrofolate and then the hydrolysis of 5,10-methenyltetrahydrofolate to 10-formyltetrahydrofolate. The protein is Bifunctional protein FolD of Corynebacterium glutamicum (strain R).